We begin with the raw amino-acid sequence, 134 residues long: Large ribosomal subunit protein bL17 (134 aa).

Belongs to the bacterial ribosomal protein bL17 family. Part of the 50S ribosomal subunit. Contacts protein L32.

The chain is Large ribosomal subunit protein bL17 from Colwellia psychrerythraea (strain 34H / ATCC BAA-681) (Vibrio psychroerythus).